Reading from the N-terminus, the 321-residue chain is Peptidase 1 (321 aa).

The N-terminal stretch at 1 to 18 (MKIILAIASLLVLSAVYA) is a signal peptide. A propeptide spanning residues 19 to 98 (RPASIKTFEE…LKTQFDLNAE (80 aa)) is cleaved from the precursor. An N-linked (GlcNAc...) asparagine glycan is attached at Asn34. A disulfide bond links Cys130 and Cys170. Cys133 is an active-site residue. N-linked (GlcNAc...) asparagine glycosylation occurs at Asn151. Catalysis depends on residues His269 and Asn289.

The protein belongs to the peptidase C1 family.

It is found in the secreted. It carries out the reaction Broad endopeptidase specificity.. Functionally, probable thiol protease. The protein is Peptidase 1 (EURM1) of Euroglyphus maynei (Mayne's house dust mite).